The chain runs to 591 residues: Probable translation initiation factor IF-2 (591 aa).

Residues 7–223 form the tr-type G domain; sequence LRTPIVCVMG…LLGLAQRFLE (217 aa). The interval 16-23 is G1; that stretch reads GHVDHGKT. Residue 16 to 23 coordinates GTP; sequence GHVDHGKT. A G2 region spans residues 41–45; the sequence is AITQH. The tract at residues 78–81 is G3; the sequence is DTPG. GTP is bound by residues 78–82 and 132–135; these read DTPGH and NKID. The tract at residues 132–135 is G4; that stretch reads NKID. Residues 200 to 202 form a G5 region; it reads SAI.

Belongs to the TRAFAC class translation factor GTPase superfamily. Classic translation factor GTPase family. IF-2 subfamily.

In terms of biological role, function in general translation initiation by promoting the binding of the formylmethionine-tRNA to ribosomes. Seems to function along with eIF-2. The polypeptide is Probable translation initiation factor IF-2 (Methanococcoides burtonii (strain DSM 6242 / NBRC 107633 / OCM 468 / ACE-M)).